A 671-amino-acid polypeptide reads, in one-letter code: MEPIEQQLTELRTTLRHHEYLYHVMDAPEIPDAEYDRLMRELRALEAQRPDLITPDSPTQRVGAAPLTAFNQIRHEVPMLSLDNVFDEESFLAFNKRVQDRLKSTENVTWCCELKLDGLAVSILYENGVLVRAATRGDGTTGEDITSNVRTIRAIPLKLRGDNIPARLEVRGEVFLPQAGFEKINEEARRSGGKVFANPRNAAAGSLRQLDPRITAKRPLTFFCYGVGILEGGELPDTHLGRLLQFKAWGLPVSDRVTLCDSPQAVLAFYHNVEEDRPTLGFDIDGVVIKVNSLALQEQLGFVARAPRWAVAFKFPAQEQMTFVRDVEFQVGRTGAITPVARLEPVQVAGVLVSNATLHNADEIDRLGLRIGDKVVIRRAGDVIPQVVNVVLSERPEETRPIVFPTHCPVCGSDVERVEGEAVTRCTGGLICGAQRKESLKHFVSRRAMDVDGMGDKIIDQLVEREYVHTPADLFRLTAGKLTGLDRMGPKSAQNVVNALEKAKATIFARFLYALGIREVGEATAAGLAAYFGTLEALQAASIDELQKVPDVGIVVATHVFNFFAEESNREVIGQLLAEGVHWPAPVVINAQEIDSPFAGKTVVLTGSLSQMSRDDAKARLVELGAKVAGSVSKKTDLVIAGEAAGSKLAKAQELGIDVIDEAEMLRLLGV.

NAD(+) contacts are provided by residues 32 to 36 (DAEYD), 81 to 82 (SL), and Glu-113. The N6-AMP-lysine intermediate role is filled by Lys-115. Residues Arg-136, Glu-173, Lys-290, and Lys-314 each coordinate NAD(+). Residues Cys-408, Cys-411, Cys-426, and Cys-432 each contribute to the Zn(2+) site. In terms of domain architecture, BRCT spans 593 to 671 (EIDSPFAGKT…EAEMLRLLGV (79 aa)).

This sequence belongs to the NAD-dependent DNA ligase family. LigA subfamily. Mg(2+) serves as cofactor. It depends on Mn(2+) as a cofactor.

It catalyses the reaction NAD(+) + (deoxyribonucleotide)n-3'-hydroxyl + 5'-phospho-(deoxyribonucleotide)m = (deoxyribonucleotide)n+m + AMP + beta-nicotinamide D-nucleotide.. DNA ligase that catalyzes the formation of phosphodiester linkages between 5'-phosphoryl and 3'-hydroxyl groups in double-stranded DNA using NAD as a coenzyme and as the energy source for the reaction. It is essential for DNA replication and repair of damaged DNA. In Salmonella arizonae (strain ATCC BAA-731 / CDC346-86 / RSK2980), this protein is DNA ligase.